A 290-amino-acid polypeptide reads, in one-letter code: Endoplasmic reticulum-Golgi intermediate compartment protein 1 (290 aa).

Residues 1–26 (MPFDFRRFDIYRKVPKDLTQPTYTGA) lie on the Cytoplasmic side of the membrane. Residues 27 to 47 (IISICCCLFILFLFLSELTGF) traverse the membrane as a helical segment. Residues 48-254 (ITTEVVNELY…RRQPLYRFIT (207 aa)) lie on the Lumenal side of the membrane. An N-linked (GlcNAc...) asparagine glycan is attached at Asn-74. Residues 255-275 (TICAIIGGTFTVAGILDSCIF) traverse the membrane as a helical segment. Over 276–290 (TASEAWKKIQLGKIH) the chain is Cytoplasmic.

The protein belongs to the ERGIC family. As to quaternary structure, may form a heteromeric complex composed of ERGIC1, ERGIC2 and ERGIC3. Within the complex, the interaction with ERGIC3 is direct. Interacts with ERGIC3/ERV46. Post-translationally, N-glycosylated.

The protein resides in the endoplasmic reticulum membrane. Its subcellular location is the endoplasmic reticulum-Golgi intermediate compartment membrane. It localises to the golgi apparatus membrane. Functionally, possible role in transport between endoplasmic reticulum and Golgi. This chain is Endoplasmic reticulum-Golgi intermediate compartment protein 1 (Ergic1), found in Mus musculus (Mouse).